The chain runs to 122 residues: Large ribosomal subunit protein uL18 (122 aa).

The disordered stretch occupies residues 1 to 27; sequence MATLSKKQQTQKRHKRLRRHLNGTNHR. The span at 9–27 shows a compositional bias: basic residues; it reads QTQKRHKRLRRHLNGTNHR.

Belongs to the universal ribosomal protein uL18 family. In terms of assembly, part of the 50S ribosomal subunit; part of the 5S rRNA/L5/L18/L25 subcomplex. Contacts the 5S and 23S rRNAs.

Its function is as follows. This is one of the proteins that bind and probably mediate the attachment of the 5S RNA into the large ribosomal subunit, where it forms part of the central protuberance. In Prochlorococcus marinus (strain MIT 9211), this protein is Large ribosomal subunit protein uL18.